The sequence spans 675 residues: DNA ligase (675 aa).

NAD(+)-binding positions include 34–38, 83–84, and glutamate 116; these read DAEYD and SL. The N6-AMP-lysine intermediate role is filled by lysine 118. Residues arginine 139, glutamate 176, lysine 293, and lysine 317 each coordinate NAD(+). Cysteine 411, cysteine 414, cysteine 429, and cysteine 435 together coordinate Zn(2+). Residues 594–675 form the BRCT domain; it reads AGENPFKGKT…FLAIVNAYKR (82 aa).

It belongs to the NAD-dependent DNA ligase family. LigA subfamily. The cofactor is Mg(2+). Requires Mn(2+) as cofactor.

It catalyses the reaction NAD(+) + (deoxyribonucleotide)n-3'-hydroxyl + 5'-phospho-(deoxyribonucleotide)m = (deoxyribonucleotide)n+m + AMP + beta-nicotinamide D-nucleotide.. DNA ligase that catalyzes the formation of phosphodiester linkages between 5'-phosphoryl and 3'-hydroxyl groups in double-stranded DNA using NAD as a coenzyme and as the energy source for the reaction. It is essential for DNA replication and repair of damaged DNA. This Mannheimia succiniciproducens (strain KCTC 0769BP / MBEL55E) protein is DNA ligase.